The sequence spans 1311 residues: MAATNEVIPTSENPSDVSGSSQKLATEETALANGVDHEEEDSGEAGGEVFQLTVVLPREPHKIPIIVSSQEAIHDVRQSIIELPGTFQYSCFHLEHKGERINDFVQISEVPGLTADSEIHLVEDPYTEKEARIHIVRVRELIGAAGDRTDTLNGIISGVSLLDSVTSAESTQNGTSTAPSHPMVGFDFQASGTLSTLLPKAQEPGPKTIKSISVSPWNPPPYHLRQKGHLLYLQVTTNEGEQFQITSHVSGFYVNKSSTGKFDPSPKSAPKAHSAHSLLALLGDLSPSFEDSFKRLQEYNNTKEPLATFQITNATPSNPWIVPSASAPLVAHQADITRTQENYLIAGIENSETLRDWNEEFQSTRELPKETVQDRVFRERLTSKLFADYNDAAARGAILVARGEIAPLNPTEGKDAQIFVYNNVFFSFGADGVGTFASEGGDEAARAAVGKDVMGVRMVNQLDIDGLFTPGTVVVDYLGKRIVGQSIVPGIFKQRDPGENQIDYGAVDGKDIVASDEKFVSVFEKLSKALKVKKHAVWDKDGKRHDLEGSIETKGLLGTDGRKYVLDLYRVTPLDITWMEEVGTALDSPKEADVASESAYPHRMTVIRPELVEAYWKVKMREWVNGELERKRQAQKTIEPTAEEKEPGAVAEASEASKSDEPTENGELAKKADESDKDAEPSKPAADQERIDIGDFKFALNPDAFSGQQPQTDEEKAEFAEDEQQVRLVCEFLRKTVLPELVNDLKEGDVGFPMDGQSLSRLLHKRGINIRYLGQVATLADGKRLESLRILAVQEMVSRAFKHVAGNYLRYLPIPLTSSCIAHLLNCLLGTDLNATPKPDVDEAMAALYPDADLKFKEVSPESLKRDIEAQILRRFRYTLDSTWTAAIKHLQLLREVSLKLGIQLEMKPYHFTKQSQTEAAAAPPTTNGEATKDAAPTGKSTNGKKKKKNAREGSPASITSVNASSPVTFNPDDILNTVPVIKEASPRSSLAEEALEAGRISLLQDQKKLGQELLLESLSLHEQIYGILHPEVARVYNSLSMLYYQLDEKEAAMELARKAVIVSERTLGVDNAETLLNYLNLGLIAHASGETKLALTYIKHALDLWKVVYGPNHPDSITTINNAAVMLQHLKEYHDSRTWFEASLKICEEVYGKHSINAATLLFQLAQALALDQDSKSAVNRMRESYNIFLTELGAEDKNTKEAEKWLEQLTQNAVSIAKHAKDVQARRNRAGIRVSPRVTLGQTQLQPQVGQTAEAAAGRDSRSSRGLDSRSIDELLKFIEGSDQANKNKKRPGRSNPKRRGGAAAAAGK.

A disordered region spans residues 1–46; that stretch reads MAATNEVIPTSENPSDVSGSSQKLATEETALANGVDHEEEDSGEAG. Positions 7 to 24 are enriched in polar residues; the sequence is VIPTSENPSDVSGSSQKL. One can recognise a Clu domain in the interval 335 to 579; it reads DITRTQENYL…RVTPLDITWM (245 aa). 2 disordered regions span residues 629-691 and 915-965; these read ERKR…QERI and QSQT…VNAS. A compositionally biased stretch (basic and acidic residues) spans 655-691; the sequence is EASKSDEPTENGELAKKADESDKDAEPSKPAADQERI. Polar residues predominate over residues 915–930; it reads QSQTEAAAAPPTTNGE. TPR repeat units lie at residues 1034 to 1067, 1076 to 1109, and 1118 to 1151; these read ARVYNSLSMLYYQLDEKEAAMELARKAVIVSERT, LLNYLNLGLIAHASGETKLALTYIKHALDLWKVV, and ITTINNAAVMLQHLKEYHDSRTWFEASLKICEEV. Residues 1236–1311 are disordered; sequence VSPRVTLGQT…RGGAAAAAGK (76 aa). The segment covering 1242–1253 has biased composition (polar residues); the sequence is LGQTQLQPQVGQ. The span at 1259-1279 shows a compositional bias: basic and acidic residues; it reads AGRDSRSSRGLDSRSIDELLK. Over residues 1289-1303 the composition is skewed to basic residues; that stretch reads KNKKRPGRSNPKRRG.

It belongs to the CLU family. In terms of assembly, may associate with the eukaryotic translation initiation factor 3 (eIF-3) complex.

The protein localises to the cytoplasm. Its function is as follows. mRNA-binding protein involved in proper cytoplasmic distribution of mitochondria. This is Clustered mitochondria protein homolog from Sclerotinia sclerotiorum (strain ATCC 18683 / 1980 / Ss-1) (White mold).